The sequence spans 398 residues: ATP-dependent RNA helicase eIF4A (398 aa).

The short motif at 25 to 53 (DSFDTMNLKPELLRGVYAYGFERPSAIQQ) is the Q motif element. A Helicase ATP-binding domain is found at 56–226 (IMPVIKGHDV…TKFMRDPVRI (171 aa)). Position 69–76 (69–76 (AQSGTGKT)) interacts with ATP. Residues 174-177 (DEAD) carry the DEAD box motif. The region spanning 237–398 (GIKQFYIAVE…EMPMNVADLI (162 aa)) is the Helicase C-terminal domain.

It belongs to the DEAD box helicase family. eIF4A subfamily. As to quaternary structure, component of the eIF4F complex, which composition varies with external and internal environmental conditions. It is composed of at least eIF4A, eIF4E and eIF4G.

The protein resides in the cytoplasm. The catalysed reaction is ATP + H2O = ADP + phosphate + H(+). Functionally, ATP-dependent RNA helicase which is a subunit of the eIF4F complex involved in cap recognition and is required for mRNA binding to ribosome. In the current model of translation initiation, eIF4A unwinds RNA secondary structures in the 5'-UTR of mRNAs which is necessary to allow efficient binding of the small ribosomal subunit, and subsequent scanning for the initiator codon. This chain is ATP-dependent RNA helicase eIF4A (tif1), found in Botryotinia fuckeliana (strain B05.10) (Noble rot fungus).